A 97-amino-acid chain; its full sequence is RxLR effector protein CRE10 (97 aa).

Residues 1 to 21 (MRLSYILVVVIAVTLQACVCA) form the signal peptide. A RxLR-dEER motif is present at residues 48–66 (RLLRGVKKRTAEREVQEER).

It belongs to the RxLR effector family.

It localises to the secreted. It is found in the host cell. Effector that is involved in host plant infection. Contributes to virulence during the early infection stage, by inhibiting plant defense responses induced by both PAMP-triggered immunity (PTI) and effector-triggered immunity (ETI). The chain is RxLR effector protein CRE10 from Phytophthora infestans (strain T30-4) (Potato late blight agent).